The sequence spans 70 residues: U-actitoxin-Avd11a (70 aa).

A ShKT domain is found at 36–70 (CNDYKSSSYCRSVGSRNECGIHKYRMYCRKTCGSC). 3 disulfides stabilise this stretch: Cys-36-Cys-70, Cys-45-Cys-63, and Cys-54-Cys-67. A crucial for binding to potassium channels region spans residues 58 to 59 (KY).

Belongs to the sea anemone type 1 potassium channel toxin family. Type 1b subfamily.

The protein localises to the secreted. The protein resides in the nematocyst. Its function is as follows. Inhibits voltage-gated potassium channels (Kv1/KCNA). This chain is U-actitoxin-Avd11a, found in Anemonia viridis (Snakelocks anemone).